Consider the following 746-residue polypeptide: Methyl-CpG-binding domain-containing protein 13 (746 aa).

Short sequence motifs (nuclear localization signal) lie at residues 13 to 20 (ERKVEIRV) and 44 to 51 (IKKLEITN). An MBD domain is found at 29-104 (VIVEKSAAQG…KESDIEDDDS (76 aa)). Disordered stretches follow at residues 131-157 (IDDV…MTSD), 169-283 (LGKK…PTPE), 295-328 (PLDD…KTRT), 348-479 (TKVQ…LKSP), 518-562 (TAAG…SGSA), and 696-746 (EPDT…FSKD). Residues 169–180 (LGKKEEVKDPIE) are compositionally biased toward basic and acidic residues. Residues 190-199 (RSQTKASTTE) show a composition bias toward polar residues. Residues 244–260 (SSEKRITRSKVEEKKNE) show a composition bias toward basic and acidic residues. Residues 256–263 (EKKNELSN) carry the Nuclear localization signal motif. Residues 427 to 451 (VAQSCNEQSSQKPHAAAATSNNRVS) are compositionally biased toward polar residues. Over residues 465-476 (VGRKPSKDKKTL) the composition is skewed to basic residues. 2 stretches are compositionally biased toward polar residues: residues 529 to 546 (PKAN…SPLR) and 702 to 730 (KSQG…TNKT). Residues 732–746 (GKPDDLRFTQSFSKD) show a composition bias toward basic and acidic residues.

The protein resides in the nucleus. Probable transcriptional regulator. In Arabidopsis thaliana (Mouse-ear cress), this protein is Methyl-CpG-binding domain-containing protein 13 (MBD13).